Consider the following 160-residue polypeptide: UPF0260 protein GDI1595/Gdia_1801 (160 aa).

Belongs to the UPF0260 family.

The polypeptide is UPF0260 protein GDI1595/Gdia_1801 (Gluconacetobacter diazotrophicus (strain ATCC 49037 / DSM 5601 / CCUG 37298 / CIP 103539 / LMG 7603 / PAl5)).